We begin with the raw amino-acid sequence, 713 residues long: Phosphoribosylformylglycinamidine synthase subunit PurL (713 aa).

Residue H32 is part of the active site. Y35 serves as a coordination point for ATP. E76 serves as a coordination point for Mg(2+). Substrate is bound by residues 77–80 and R99; that span reads SHNH. The Proton acceptor role is filled by H78. D100 provides a ligand contact to Mg(2+). Substrate is bound at residue Q224. D252 is a Mg(2+) binding site. 296–298 is a substrate binding site; it reads ESQ. The ATP site is built by D471 and G508. Position 509 (N509) interacts with Mg(2+). S511 serves as a coordination point for substrate.

It belongs to the FGAMS family. Monomer. Part of the FGAM synthase complex composed of 1 PurL, 1 PurQ and 2 PurS subunits.

It is found in the cytoplasm. It catalyses the reaction N(2)-formyl-N(1)-(5-phospho-beta-D-ribosyl)glycinamide + L-glutamine + ATP + H2O = 2-formamido-N(1)-(5-O-phospho-beta-D-ribosyl)acetamidine + L-glutamate + ADP + phosphate + H(+). It functions in the pathway purine metabolism; IMP biosynthesis via de novo pathway; 5-amino-1-(5-phospho-D-ribosyl)imidazole from N(2)-formyl-N(1)-(5-phospho-D-ribosyl)glycinamide: step 1/2. Functionally, part of the phosphoribosylformylglycinamidine synthase complex involved in the purines biosynthetic pathway. Catalyzes the ATP-dependent conversion of formylglycinamide ribonucleotide (FGAR) and glutamine to yield formylglycinamidine ribonucleotide (FGAM) and glutamate. The FGAM synthase complex is composed of three subunits. PurQ produces an ammonia molecule by converting glutamine to glutamate. PurL transfers the ammonia molecule to FGAR to form FGAM in an ATP-dependent manner. PurS interacts with PurQ and PurL and is thought to assist in the transfer of the ammonia molecule from PurQ to PurL. This is Phosphoribosylformylglycinamidine synthase subunit PurL from Thermococcus sibiricus (strain DSM 12597 / MM 739).